The primary structure comprises 193 residues: ATP-dependent Clp protease proteolytic subunit 2 (193 aa).

S98 functions as the Nucleophile in the catalytic mechanism. Residue H123 is part of the active site.

This sequence belongs to the peptidase S14 family. Fourteen ClpP subunits assemble into 2 heptameric rings which stack back to back to give a disk-like structure with a central cavity, resembling the structure of eukaryotic proteasomes.

Its subcellular location is the cytoplasm. The catalysed reaction is Hydrolysis of proteins to small peptides in the presence of ATP and magnesium. alpha-casein is the usual test substrate. In the absence of ATP, only oligopeptides shorter than five residues are hydrolyzed (such as succinyl-Leu-Tyr-|-NHMec, and Leu-Tyr-Leu-|-Tyr-Trp, in which cleavage of the -Tyr-|-Leu- and -Tyr-|-Trp bonds also occurs).. Cleaves peptides in various proteins in a process that requires ATP hydrolysis. Has a chymotrypsin-like activity. Plays a major role in the degradation of misfolded proteins. The polypeptide is ATP-dependent Clp protease proteolytic subunit 2 (Bacillus cereus (strain ATCC 14579 / DSM 31 / CCUG 7414 / JCM 2152 / NBRC 15305 / NCIMB 9373 / NCTC 2599 / NRRL B-3711)).